Here is a 734-residue protein sequence, read N- to C-terminus: Photosystem I P700 chlorophyll a apoprotein A2 (734 aa).

Helical transmembrane passes span 46–69, 135–158, 175–199, 273–291, 330–353, 369–395, 417–439, and 517–535; these read IFAS…FHVA, LYTG…LHLE, LNHH…HVAI, IAHH…GHTY, LHFQ…QHMY, AALY…IFLT, AIIS…LYVH, and FPVH…LILS. [4Fe-4S] cluster-binding residues include Cys-559 and Cys-568. 2 helical membrane-spanning segments follow: residues 575-596 and 643-665; these read AFYP…HWHW and LSVW…MFLI. 3 residues coordinate chlorophyll a: His-654, Met-662, and Tyr-670. Trp-671 contributes to the phylloquinone binding site. The helical transmembrane segment at 707–727 threads the bilayer; it reads LVGLAHFSVGYIFTYAAFPIP.

It belongs to the PsaA/PsaB family. The PsaA/B heterodimer binds the P700 chlorophyll special pair and subsequent electron acceptors. PSI consists of a core antenna complex that captures photons, and an electron transfer chain that converts photonic excitation into a charge separation. The eukaryotic PSI reaction center is composed of at least 11 subunits. The cofactor is P700 is a chlorophyll a/chlorophyll a' dimer, A0 is one or more chlorophyll a, A1 is one or both phylloquinones and FX is a shared 4Fe-4S iron-sulfur center..

It localises to the plastid. Its subcellular location is the chloroplast thylakoid membrane. It carries out the reaction reduced [plastocyanin] + hnu + oxidized [2Fe-2S]-[ferredoxin] = oxidized [plastocyanin] + reduced [2Fe-2S]-[ferredoxin]. Its function is as follows. PsaA and PsaB bind P700, the primary electron donor of photosystem I (PSI), as well as the electron acceptors A0, A1 and FX. PSI is a plastocyanin-ferredoxin oxidoreductase, converting photonic excitation into a charge separation, which transfers an electron from the donor P700 chlorophyll pair to the spectroscopically characterized acceptors A0, A1, FX, FA and FB in turn. Oxidized P700 is reduced on the lumenal side of the thylakoid membrane by plastocyanin. The polypeptide is Photosystem I P700 chlorophyll a apoprotein A2 (Selaginella uncinata (Blue spike-moss)).